Here is a 621-residue protein sequence, read N- to C-terminus: Auxin response factor 13 (621 aa).

A DNA-binding region (TF-B3) is located at residues 124–228 (FSKILTASDV…ELRFGIRRAK (105 aa)). The region spanning 508-600 (RSRIKVHMQG…EIKKMKLKNK (93 aa)) is the PB1 domain.

This sequence belongs to the ARF family. In terms of assembly, homodimers and heterodimers.

The protein localises to the nucleus. Its function is as follows. Auxin response factors (ARFs) are transcriptional factors that bind specifically to the DNA sequence 5'-TGTCTC-3' found in the auxin-responsive promoter elements (AuxREs). Could act as transcriptional activator or repressor. Formation of heterodimers with Aux/IAA proteins may alter their ability to modulate early auxin response genes expression. This chain is Auxin response factor 13 (ARF13), found in Arabidopsis thaliana (Mouse-ear cress).